The chain runs to 314 residues: Thymidylate synthase (314 aa).

Residues Arg-21 and 176 to 177 (RR) contribute to the dUMP site. Catalysis depends on Cys-196, which acts as the Nucleophile. Residues 216-219 (RSAD), Asn-227, and 257-259 (HLY) each bind dUMP. Asp-219 serves as a coordination point for (6R)-5,10-methylene-5,6,7,8-tetrahydrofolate. (6R)-5,10-methylene-5,6,7,8-tetrahydrofolate is bound at residue Ser-313.

This sequence belongs to the thymidylate synthase family. Bacterial-type ThyA subfamily. Homodimer.

It is found in the cytoplasm. The enzyme catalyses dUMP + (6R)-5,10-methylene-5,6,7,8-tetrahydrofolate = 7,8-dihydrofolate + dTMP. It participates in pyrimidine metabolism; dTTP biosynthesis. In terms of biological role, catalyzes the reductive methylation of 2'-deoxyuridine-5'-monophosphate (dUMP) to 2'-deoxythymidine-5'-monophosphate (dTMP) while utilizing 5,10-methylenetetrahydrofolate (mTHF) as the methyl donor and reductant in the reaction, yielding dihydrofolate (DHF) as a by-product. This enzymatic reaction provides an intracellular de novo source of dTMP, an essential precursor for DNA biosynthesis. The polypeptide is Thymidylate synthase (Listeria monocytogenes serotype 4b (strain F2365)).